Here is a 431-residue protein sequence, read N- to C-terminus: 4-hydroxy-3-methylbut-2-en-1-yl diphosphate synthase (flavodoxin) (431 aa).

The segment covering 1–12 (MNKLENPLRDDV) has biased composition (basic and acidic residues). Residues 1-20 (MNKLENPLRDDVAGPAPRHQ) are disordered. [4Fe-4S] cluster is bound by residues Cys310, Cys313, Cys356, and Glu363.

It belongs to the IspG family. It depends on [4Fe-4S] cluster as a cofactor.

The catalysed reaction is (2E)-4-hydroxy-3-methylbut-2-enyl diphosphate + oxidized [flavodoxin] + H2O + 2 H(+) = 2-C-methyl-D-erythritol 2,4-cyclic diphosphate + reduced [flavodoxin]. It participates in isoprenoid biosynthesis; isopentenyl diphosphate biosynthesis via DXP pathway; isopentenyl diphosphate from 1-deoxy-D-xylulose 5-phosphate: step 5/6. In terms of biological role, converts 2C-methyl-D-erythritol 2,4-cyclodiphosphate (ME-2,4cPP) into 1-hydroxy-2-methyl-2-(E)-butenyl 4-diphosphate. This Rhodopseudomonas palustris (strain TIE-1) protein is 4-hydroxy-3-methylbut-2-en-1-yl diphosphate synthase (flavodoxin).